We begin with the raw amino-acid sequence, 372 residues long: MSNQHAXMXSNLLPVGSNISTWWNFGSMLLACLMLQIMTGFFLAIHYTANISLAFSSVIHITRDVPYGWIMQNLHTISASLFFICIYTHIARGLYYGLYLNKEVWLSGTALLVTLMATAFFGYVLPWGQMSFWAATVITNLLTAIPYLGVTLTTWLWGGFSINDPTLTRFFALHFILPFIIISLSSVHIILLHSEGSNNPLGTNSDIDKIPFHPYHSYKDMLMITSMITLLLLILSFSPDLLNDPENFSKANPLVTPQHIKPEWYFLFAYGILRSIPNKLGGTLALLLSVMILTTTPFTHTSFTRSMMFRPLSQILFWTLIATFITITWTASKPVEPPFITISQTTSIFYFSFFILTPLLGWTENKMMMTNN.

Helical transmembrane passes span 25-45, 69-90, 105-125, and 170-190; these read FGSM…FLAI, WIMQ…YTHI, WLSG…GYVL, and FFAL…VHII. Residues His75 and His89 each coordinate heme b. Residues His174 and His188 each coordinate heme b. His193 contacts a ubiquinone. Helical transmembrane passes span 218–238, 280–300, 312–332, and 339–358; these read YKDM…LSFS, LGGT…PFTH, LSQI…WTAS, and FITI…ILTP.

Belongs to the cytochrome b family. The cytochrome bc1 complex contains 3 respiratory subunits (MT-CYB, CYC1 and UQCRFS1), 2 core proteins (UQCRC1 and UQCRC2) and probably 6 low-molecular weight proteins. It depends on heme b as a cofactor.

The protein localises to the mitochondrion inner membrane. Component of the ubiquinol-cytochrome c reductase complex (complex III or cytochrome b-c1 complex) that is part of the mitochondrial respiratory chain. The b-c1 complex mediates electron transfer from ubiquinol to cytochrome c. Contributes to the generation of a proton gradient across the mitochondrial membrane that is then used for ATP synthesis. This Naja kaouthia (Monocled cobra) protein is Cytochrome b (MT-CYB).